The sequence spans 358 residues: uncharacterized protein (358 aa).

In terms of domain architecture, EF-hand spans 229-264 (KQLHEFKLAFDYFDQEKNGWLDYEHFELCLKSQGYN). Ca(2+) contacts are provided by D242, N246, W248, and H253.

This is an uncharacterized protein from Caenorhabditis elegans.